A 640-amino-acid chain; its full sequence is Threonine--tRNA ligase (640 aa).

One can recognise a TGS domain in the interval 1–61 (MPVVTLPDGS…DKDSHLAIIT (61 aa)). Residues 242–533 (DHRRLGKQLD…LIENHAGNMP (292 aa)) form a catalytic region. 3 residues coordinate Zn(2+): Cys333, His384, and His510.

The protein belongs to the class-II aminoacyl-tRNA synthetase family. In terms of assembly, homodimer. Requires Zn(2+) as cofactor.

Its subcellular location is the cytoplasm. It carries out the reaction tRNA(Thr) + L-threonine + ATP = L-threonyl-tRNA(Thr) + AMP + diphosphate + H(+). Its function is as follows. Catalyzes the attachment of threonine to tRNA(Thr) in a two-step reaction: L-threonine is first activated by ATP to form Thr-AMP and then transferred to the acceptor end of tRNA(Thr). Also edits incorrectly charged L-seryl-tRNA(Thr). In Polynucleobacter asymbioticus (strain DSM 18221 / CIP 109841 / QLW-P1DMWA-1) (Polynucleobacter necessarius subsp. asymbioticus), this protein is Threonine--tRNA ligase.